Here is a 226-residue protein sequence, read N- to C-terminus: Isoprenyl transferase (226 aa).

The active site involves D12. Residue D12 participates in Mg(2+) binding. Residues 13–16 (GNAR), W17, K25, H29, and 57–59 (SSE) contribute to the substrate site. N60 functions as the Proton acceptor in the catalytic mechanism. Substrate-binding positions include W61, R63, R174, and 180–182 (RIS). E193 serves as a coordination point for Mg(2+).

Belongs to the UPP synthase family. Homodimer. The cofactor is Mg(2+).

Catalyzes the condensation of isopentenyl diphosphate (IPP) with allylic pyrophosphates generating different type of terpenoids. The chain is Isoprenyl transferase from Rickettsia bellii (strain RML369-C).